The chain runs to 614 residues: Protein NRT1/ PTR FAMILY 7.3 (614 aa).

The next 2 helical transmembrane spans lie at 41–61 and 87–107; these read WVAG…FFGV and WTGT…SYWG. At Thr-111 the chain carries Phosphothreonine. A run of 9 helical transmembrane segments spans residues 114-134, 152-172, 196-216, 226-246, 355-375, 390-410, 435-455, 515-535, and 559-579; these read IFQV…YMFL, MMEI…YGGY, IAFF…SNTI, WALG…LFLV, PIWL…SLFV, IPPA…IFLY, MGIG…VECY, LCMM…TMVV, and FYFL…ACAK. The segment at 592 to 614 is disordered; the sequence is MQDMSDDDYDTESEEEREKDSKV. Positions 593 to 606 are enriched in acidic residues; it reads QDMSDDDYDTESEE.

This sequence belongs to the major facilitator superfamily. Proton-dependent oligopeptide transporter (POT/PTR) (TC 2.A.17) family. High expression in roots. Barely detected in shoots. Expressed in root pericycle cells close to the xylem.

The protein localises to the cell membrane. Functionally, low-affinity proton-dependent bidirectional nitrate transporter. Involved in nitrate loading into xylem and not in nitrate uptake. Not involved in histidine or dipeptides transport. The sequence is that of Protein NRT1/ PTR FAMILY 7.3 (NPF7.3) from Arabidopsis thaliana (Mouse-ear cress).